Consider the following 59-residue polypeptide: Antitoxin RelB4 (59 aa).

The tract at residues 38–59 (VGEWLKTLGTPHQTPPPYSWRK) is disordered. The segment covering 50-59 (QTPPPYSWRK) has biased composition (pro residues).

Functionally, antitoxin component of a type II toxin-antitoxin (TA) system. Neutralizes the effect of cognate toxin RelE4, but no other RelE or ParE toxin. This Caulobacter vibrioides (strain ATCC 19089 / CIP 103742 / CB 15) (Caulobacter crescentus) protein is Antitoxin RelB4 (relB4).